A 637-amino-acid chain; its full sequence is Phosphomethylpyrimidine synthase (637 aa).

Substrate-binding positions include Asn242, Met271, Tyr300, His336, 356–358 (SRG), 397–400 (DGLR), and Glu436. A Zn(2+)-binding site is contributed by His440. Tyr463 is a substrate binding site. A Zn(2+)-binding site is contributed by His504. Residues Cys584, Cys587, and Cys592 each contribute to the [4Fe-4S] cluster site.

The protein belongs to the ThiC family. In terms of assembly, homodimer. The cofactor is [4Fe-4S] cluster.

It carries out the reaction 5-amino-1-(5-phospho-beta-D-ribosyl)imidazole + S-adenosyl-L-methionine = 4-amino-2-methyl-5-(phosphooxymethyl)pyrimidine + CO + 5'-deoxyadenosine + formate + L-methionine + 3 H(+). It participates in cofactor biosynthesis; thiamine diphosphate biosynthesis. Its function is as follows. Catalyzes the synthesis of the hydroxymethylpyrimidine phosphate (HMP-P) moiety of thiamine from aminoimidazole ribotide (AIR) in a radical S-adenosyl-L-methionine (SAM)-dependent reaction. The polypeptide is Phosphomethylpyrimidine synthase (Bordetella pertussis (strain Tohama I / ATCC BAA-589 / NCTC 13251)).